Reading from the N-terminus, the 418-residue chain is Tryptophan synthase beta chain (418 aa).

Residues 1–12 (MTSTLPTANTPD) show a composition bias toward polar residues. The disordered stretch occupies residues 1–21 (MTSTLPTANTPDPASLMPSVR). An N6-(pyridoxal phosphate)lysine modification is found at Lys-111.

It belongs to the TrpB family. In terms of assembly, tetramer of two alpha and two beta chains. Pyridoxal 5'-phosphate is required as a cofactor.

The catalysed reaction is (1S,2R)-1-C-(indol-3-yl)glycerol 3-phosphate + L-serine = D-glyceraldehyde 3-phosphate + L-tryptophan + H2O. The protein operates within amino-acid biosynthesis; L-tryptophan biosynthesis; L-tryptophan from chorismate: step 5/5. The beta subunit is responsible for the synthesis of L-tryptophan from indole and L-serine. This is Tryptophan synthase beta chain from Synechococcus sp. (strain CC9311).